The following is a 446-amino-acid chain: Enolase (446 aa).

Residues H164 and E173 each contribute to the substrate site. E216 (proton donor) is an active-site residue. Mg(2+)-binding residues include D251, E302, and D329. 2 residues coordinate substrate: E302 and D329. K354 serves as the catalytic Proton acceptor. Residues 381-384 and K405 each bind substrate; that span reads SHRS.

This sequence belongs to the enolase family. In terms of assembly, homodimer. Mg(2+) serves as cofactor.

It is found in the cytoplasm. The catalysed reaction is (2R)-2-phosphoglycerate = phosphoenolpyruvate + H2O. Its pathway is carbohydrate degradation; glycolysis; pyruvate from D-glyceraldehyde 3-phosphate: step 4/5. The sequence is that of Enolase (ENO1) from Oryza sativa subsp. japonica (Rice).